A 156-amino-acid chain; its full sequence is D-aminoacyl-tRNA deacylase (156 aa).

A Gly-cisPro motif, important for rejection of L-amino acids motif is present at residues glycine 142–proline 143.

Belongs to the DTD family. In terms of assembly, homodimer.

Its subcellular location is the cytoplasm. It carries out the reaction glycyl-tRNA(Ala) + H2O = tRNA(Ala) + glycine + H(+). The enzyme catalyses a D-aminoacyl-tRNA + H2O = a tRNA + a D-alpha-amino acid + H(+). An aminoacyl-tRNA editing enzyme that deacylates mischarged D-aminoacyl-tRNAs. Also deacylates mischarged glycyl-tRNA(Ala), protecting cells against glycine mischarging by AlaRS. Acts via tRNA-based rather than protein-based catalysis; rejects L-amino acids rather than detecting D-amino acids in the active site. By recycling D-aminoacyl-tRNA to D-amino acids and free tRNA molecules, this enzyme counteracts the toxicity associated with the formation of D-aminoacyl-tRNA entities in vivo and helps enforce protein L-homochirality. The chain is D-aminoacyl-tRNA deacylase from Delftia acidovorans (strain DSM 14801 / SPH-1).